Reading from the N-terminus, the 250-residue chain is Diphthine synthase (250 aa).

Residues Leu9, Asp85, Val88, Ser113–Ile114, Leu165, Ala202, and His227 contribute to the S-adenosyl-L-methionine site.

It belongs to the diphthine synthase family. In terms of assembly, homodimer.

The catalysed reaction is 2-[(3S)-amino-3-carboxypropyl]-L-histidyl-[translation elongation factor 2] + 3 S-adenosyl-L-methionine = diphthine-[translation elongation factor 2] + 3 S-adenosyl-L-homocysteine + 3 H(+). It functions in the pathway protein modification; peptidyl-diphthamide biosynthesis. In terms of biological role, S-adenosyl-L-methionine-dependent methyltransferase that catalyzes the trimethylation of the amino group of the modified target histidine residue in translation elongation factor 2 (EF-2), to form an intermediate called diphthine. The three successive methylation reactions represent the second step of diphthamide biosynthesis. The polypeptide is Diphthine synthase (Methanoregula boonei (strain DSM 21154 / JCM 14090 / 6A8)).